Reading from the N-terminus, the 290-residue chain is Agroclavine dehydrogenase (290 aa).

Belongs to the fgaFS/easG family. Monomer.

The catalysed reaction is agroclavine + NADP(+) = didehydroagroclavine + NADPH + H(+). The protein operates within alkaloid biosynthesis; ergot alkaloid biosynthesis. Functionally, agroclavine dehydrogenase; part of the gene cluster that mediates the biosynthesis of fungal ergot alkaloid. DmaW catalyzes the first step of ergot alkaloid biosynthesis by condensing dimethylallyl diphosphate (DMAP) and tryptophan to form 4-dimethylallyl-L-tryptophan. The second step is catalyzed by the methyltransferase easF that methylates 4-dimethylallyl-L-tryptophan in the presence of S-adenosyl-L-methionine, resulting in the formation of 4-dimethylallyl-L-abrine. The catalase easC and the FAD-dependent oxidoreductase easE then transform 4-dimethylallyl-L-abrine to chanoclavine-I which is further oxidized by easD in the presence of NAD(+), resulting in the formation of chanoclavine-I aldehyde. Agroclavine dehydrogenase easG then mediates the conversion of chanoclavine-I aldehyde to agroclavine via a non-enzymatic adduct reaction: the substrate is an iminium intermediate that is formed spontaneously from chanoclavine-I aldehyde in the presence of glutathione. The presence of easA is not required to complete this reaction. Further conversion of agroclavine to paspalic acid is a two-step process involving oxidation of agroclavine to elymoclavine and of elymoclavine to paspalic acid, the second step being performed by the elymoclavine oxidase cloA. Paspalic acid is then further converted to D-lysergic acid. Ergopeptines are assembled from D-lysergic acid and three different amino acids by the D-lysergyl-peptide-synthetases composed each of a monomudular and a trimodular nonribosomal peptide synthetase subunit. LpsB and lpsC encode the monomodular subunits responsible for D-lysergic acid activation and incorporation into the ergopeptine backbone. LpsA1 and A2 subunits encode the trimodular nonribosomal peptide synthetase assembling the tripeptide portion of ergopeptines. LpsA1 is responsible for formation of the major ergopeptine, ergotamine, and lpsA2 for alpha-ergocryptine, the minor ergopeptine of the total alkaloid mixture elaborated by C.purpurea. D-lysergyl-tripeptides are assembled by the nonribosomal peptide synthetases and released as N-(D-lysergyl-aminoacyl)-lactams. Cyclolization of the D-lysergyl-tripeptides is performed by the Fe(2+)/2-ketoglutarate-dependent dioxygenase easH which introduces a hydroxyl group into N-(D-lysergyl-aminoacyl)-lactam at alpha-C of the aminoacyl residue followed by spontaneous condensation with the terminal lactam carbonyl group. The sequence is that of Agroclavine dehydrogenase from Claviceps purpurea (Ergot fungus).